The sequence spans 301 residues: Probable alpha-L-glutamate ligase 1 (301 aa).

The ATP-grasp domain occupies 104–287; that stretch reads MQLMSRRGIG…VAGAIIAFIE (184 aa). Residues K141, 178-179, D187, and 211-213 each bind ATP; these read EY and RSN. Mg(2+) is bound by residues D248, E260, and N262. Positions 248, 260, and 262 each coordinate Mn(2+).

The protein belongs to the RimK family. The cofactor is Mg(2+). Mn(2+) is required as a cofactor.

The protein is Probable alpha-L-glutamate ligase 1 of Shewanella amazonensis (strain ATCC BAA-1098 / SB2B).